Here is a 190-residue protein sequence, read N- to C-terminus: Crossover junction endodeoxyribonuclease RuvC (190 aa).

Active-site residues include Asp8, Glu67, and Asp139. 3 residues coordinate Mg(2+): Asp8, Glu67, and Asp139.

The protein belongs to the RuvC family. As to quaternary structure, homodimer which binds Holliday junction (HJ) DNA. The HJ becomes 2-fold symmetrical on binding to RuvC with unstacked arms; it has a different conformation from HJ DNA in complex with RuvA. In the full resolvosome a probable DNA-RuvA(4)-RuvB(12)-RuvC(2) complex forms which resolves the HJ. The cofactor is Mg(2+).

Its subcellular location is the cytoplasm. The enzyme catalyses Endonucleolytic cleavage at a junction such as a reciprocal single-stranded crossover between two homologous DNA duplexes (Holliday junction).. In terms of biological role, the RuvA-RuvB-RuvC complex processes Holliday junction (HJ) DNA during genetic recombination and DNA repair. Endonuclease that resolves HJ intermediates. Cleaves cruciform DNA by making single-stranded nicks across the HJ at symmetrical positions within the homologous arms, yielding a 5'-phosphate and a 3'-hydroxyl group; requires a central core of homology in the junction. The consensus cleavage sequence is 5'-(A/T)TT(C/G)-3'. Cleavage occurs on the 3'-side of the TT dinucleotide at the point of strand exchange. HJ branch migration catalyzed by RuvA-RuvB allows RuvC to scan DNA until it finds its consensus sequence, where it cleaves and resolves the cruciform DNA. The protein is Crossover junction endodeoxyribonuclease RuvC of Haemophilus influenzae (strain PittGG).